A 92-amino-acid chain; its full sequence is Large ribosomal subunit protein uL23 (92 aa).

Belongs to the universal ribosomal protein uL23 family. As to quaternary structure, part of the 50S ribosomal subunit. Contacts protein L29, and trigger factor when it is bound to the ribosome.

Functionally, one of the early assembly proteins it binds 23S rRNA. One of the proteins that surrounds the polypeptide exit tunnel on the outside of the ribosome. Forms the main docking site for trigger factor binding to the ribosome. In Bdellovibrio bacteriovorus (strain ATCC 15356 / DSM 50701 / NCIMB 9529 / HD100), this protein is Large ribosomal subunit protein uL23.